Here is a 97-residue protein sequence, read N- to C-terminus: Lipolysis-activating peptide 1-alpha chain (97 aa).

The first 21 residues, 1 to 21 (MNITLFCSVFILISLAGLSVS), serve as a signal peptide directing secretion. Residues 25 to 88 (PGNYPMSLYG…FWAAHKNHCK (64 aa)) enclose the LCN-type CS-alpha/beta domain. 3 disulfides stabilise this stretch: C39–C62, C48–C67, and C52–C69.

The protein belongs to the long (3 C-C) scorpion toxin superfamily. As to quaternary structure, monomer (edited version) and heterodimer (non-edited version) of this alpha chain and a beta chain (AC D9U2A2). In terms of tissue distribution, expressed by the venom gland.

The protein resides in the secreted. The heterodimer non-edited LVP1 induces lipolysis in rat adipocytes. Induction of lipolysis by LVP1 appears to be mediated through the beta-2 adrenergic receptor pathway (ADRB2). Functionally, the edited BmKBTx-like, similar to beta-toxins, may modulate voltage-gated sodium channels (Nav) and may block voltage-gated potassium channels (Kv). The polypeptide is Lipolysis-activating peptide 1-alpha chain (Lychas mucronatus (Chinese swimming scorpion)).